Here is a 304-residue protein sequence, read N- to C-terminus: Glycine--tRNA ligase alpha subunit (304 aa).

It belongs to the class-II aminoacyl-tRNA synthetase family. In terms of assembly, tetramer of two alpha and two beta subunits.

It is found in the cytoplasm. It catalyses the reaction tRNA(Gly) + glycine + ATP = glycyl-tRNA(Gly) + AMP + diphosphate. The chain is Glycine--tRNA ligase alpha subunit from Afipia carboxidovorans (strain ATCC 49405 / DSM 1227 / KCTC 32145 / OM5) (Oligotropha carboxidovorans).